We begin with the raw amino-acid sequence, 297 residues long: Release factor glutamine methyltransferase (297 aa).

S-adenosyl-L-methionine contacts are provided by residues 134–138 (GTGSG), Asp157, and Asn200. 200-203 (NPPY) provides a ligand contact to substrate.

This sequence belongs to the protein N5-glutamine methyltransferase family. PrmC subfamily.

It carries out the reaction L-glutaminyl-[peptide chain release factor] + S-adenosyl-L-methionine = N(5)-methyl-L-glutaminyl-[peptide chain release factor] + S-adenosyl-L-homocysteine + H(+). Functionally, methylates the class 1 translation termination release factors RF1/PrfA and RF2/PrfB on the glutamine residue of the universally conserved GGQ motif. This chain is Release factor glutamine methyltransferase, found in Bradyrhizobium diazoefficiens (strain JCM 10833 / BCRC 13528 / IAM 13628 / NBRC 14792 / USDA 110).